An 80-amino-acid polypeptide reads, in one-letter code: Defensin-like protein CAL1 (80 aa).

The N-terminal stretch at 1–31 is a signal peptide; that stretch reads MAPSRRMVASAFLLLAILVATEMGTTKVAEA. Cystine bridges form between C34-C80, C45-C65, C51-C74, and C55-C76.

The protein belongs to the DEFL family. Expressed preferentially in root exodermis and xylem parenchyma cells in vasculature of root and flag leaf sheath.

The protein localises to the secreted. The protein resides in the extracellular space. In terms of biological role, plant defensin-like protein involved in accumulation of cadmium (Cd) in rice leaves. Mediates Cd efflux from cytosol into extracellular spaces via chelation. This drives Cd secretion from xylem parenchyma cells into the xylem vessels, hence lowering Cd levels in cytosol meanwhile promoting Cd translocation from roots to shoots. This chain is Defensin-like protein CAL1, found in Oryza sativa subsp. japonica (Rice).